Reading from the N-terminus, the 86-residue chain is MVKIRLTRGGAKKRPFYHIIVTDVRSARDGRNIERVGFYNPVAQGGEKRIELDLARVDHWVKNGAQPTEKVRNLIKEATKSQAAAA.

Belongs to the bacterial ribosomal protein bS16 family.

This Stenotrophomonas maltophilia (strain R551-3) protein is Small ribosomal subunit protein bS16.